Reading from the N-terminus, the 1648-residue chain is Homeostatic regulator of DAG (1648 aa).

Positions 5-101 (IPPTLPLDLQ…YRVTTINSTS (97 aa)) constitute a DMAP1-binding domain. Asn-28, Asn-71, and Asn-98 each carry an N-linked (GlcNAc...) asparagine glycan. Disordered regions lie at residues 52–73 (PYTP…RNTS) and 96–130 (TINS…ENGS). Positions 60-71 (NSRKSKHLHRRN) are enriched in basic residues. 2 stretches are compositionally biased toward polar residues: residues 96–105 (TINSTSANNT) and 113–128 (YTAS…SDEN). Ser-99 carries the phosphoserine modification. Asn-128, Asn-151, and Asn-209 each carry an N-linked (GlcNAc...) asparagine glycan. Residues 158 to 893 (AMTDSLPLIL…VEKKFLNNDL (736 aa)) are fatty acyl-AMP ligase-like domain 1. A helical transmembrane segment spans residues 228–248 (VIEFTIALLGCFISGMAAVPV). N-linked (GlcNAc...) asparagine glycosylation is found at Asn-288, Asn-328, Asn-575, Asn-644, and Asn-730. Residue Ser-751 is modified to Phosphoserine. Residues Asn-881, Asn-917, Asn-995, and Asn-1009 are each glycosylated (N-linked (GlcNAc...) asparagine). A fatty acyl-AMP ligase-like domain 2 region spans residues 950–1648 (VKPKLALQCS…LLSDYEKDNI (699 aa)). Residues 1061-1081 (YVAMIMACLYCNLLVIPLPSV) form a helical membrane-spanning segment. Asn-1198 carries N-linked (GlcNAc...) asparagine glycosylation. The chain crosses the membrane as a helical span at residues 1224–1244 (GLGFMFSCLLGIYTGASTCLF). Asn-1301, Asn-1302, Asn-1447, Asn-1472, Asn-1488, Asn-1565, Asn-1597, and Asn-1634 each carry an N-linked (GlcNAc...) asparagine glycan.

It is found in the vacuole membrane. The protein resides in the mitochondrion membrane. Homeostatic regulator of a chemically distinct subset of diacylglycerols (DAGs) with C36 chain length that prevents the toxic accumulation of these specific DAGs in the logarithmic growth phase, which otherwise leads to endoplasmic reticulum stress. Maintains the basal level of DAG subspecies by directly facilitating DAG to triacylglycerol (TAG) conversion process, possibly via adenylation activity of its FLD domains. Does not affect the abundant DAG species (representing over 90% of total DAG pool), comprised of C32 and C34 chain lengths. Required for vacuole fusion-mediated osmoadaptation. The sequence is that of Homeostatic regulator of DAG from Saccharomyces cerevisiae (strain ATCC 204508 / S288c) (Baker's yeast).